Here is a 138-residue protein sequence, read N- to C-terminus: Large ribosomal subunit protein uL14m (138 aa).

The protein belongs to the universal ribosomal protein uL14 family. In terms of assembly, component of the mitochondrial large ribosomal subunit (mt-LSU). Mature yeast 74S mitochondrial ribosomes consist of a small (37S) and a large (54S) subunit. The 37S small subunit contains a 15S ribosomal RNA (15S mt-rRNA) and 34 different proteins. The 54S large subunit contains a 21S rRNA (21S mt-rRNA) and 46 different proteins.

It localises to the mitochondrion. Component of the mitochondrial ribosome (mitoribosome), a dedicated translation machinery responsible for the synthesis of mitochondrial genome-encoded proteins, including at least some of the essential transmembrane subunits of the mitochondrial respiratory chain. The mitoribosomes are attached to the mitochondrial inner membrane and translation products are cotranslationally integrated into the membrane. The chain is Large ribosomal subunit protein uL14m (MRPL38) from Saccharomyces cerevisiae (strain ATCC 204508 / S288c) (Baker's yeast).